The primary structure comprises 437 residues: MFDYILSLGGTVFVPIIMIVIGLIFRIPWLQAIKAGVTVGIGFVGMGLVIVMAIDSLSPPIKVMIERFGLALHVFDVGAGPASGVGYATAIGAMIIPVIFLLNVAMLVTRLTKTMNVDIYNYWHYAITGTVVQLMTGSLIYGVLGAICHAALSLKMADWTAKRVQNIVGLEGISIPQGYGSSSVPLFVLLDAIYEKIPFMKGRNIDAQEIQKRYGMVGDPVIIGVVLGLIFGLAAGEGFKGCASLMITVAAIMVLFPRMIRLIVEGLLPISDGARKFFQKYFKGREVYIGLDTAVTLGHPTTIAVGLLLIPIMLILASILPGNKVLPLADLPVAPFFICMATVIHRGDLVRTLISGVIVMITVLLIATQFAPYFTEMALKGGFSFAGESAQISALSVGNMFGWSISELMSLGIIGVVVAVGIVASVVLFLRKRELSE.

The region spanning Phe2 to Glu437 is the PTS EIIC type-2 domain. The next 12 helical transmembrane spans lie at Ile5–Phe25, Ala35–Asp55, Ala88–Val108, Leu134–Leu154, Ile173–Ile193, Gly215–Ala235, Gly236–Phe256, Thr302–Gly322, Val325–His345, Ile354–Phe374, Phe385–Ile405, and Ser410–Leu430.

It is found in the cell inner membrane. In terms of biological role, the phosphoenolpyruvate-dependent sugar phosphotransferase system (PTS), a major carbohydrate active -transport system, catalyzes the phosphorylation of incoming sugar substrates concomitant with their translocation across the cell membrane. In Escherichia coli (strain K12), this protein is Putative permease IIC component (sgcC).